The chain runs to 201 residues: Dephospho-CoA kinase (201 aa).

One can recognise a DPCK domain in the interval 4 to 201 (IIGITGGIAS…LEGGRQDDRD (198 aa)). 12–17 (ASGKST) is an ATP binding site.

Belongs to the CoaE family.

Its subcellular location is the cytoplasm. It carries out the reaction 3'-dephospho-CoA + ATP = ADP + CoA + H(+). The protein operates within cofactor biosynthesis; coenzyme A biosynthesis; CoA from (R)-pantothenate: step 5/5. Catalyzes the phosphorylation of the 3'-hydroxyl group of dephosphocoenzyme A to form coenzyme A. This chain is Dephospho-CoA kinase, found in Streptococcus pneumoniae serotype 4 (strain ATCC BAA-334 / TIGR4).